A 165-amino-acid polypeptide reads, in one-letter code: Putative pre-16S rRNA nuclease (165 aa).

It belongs to the YqgF nuclease family.

It localises to the cytoplasm. Could be a nuclease involved in processing of the 5'-end of pre-16S rRNA. This Brucella anthropi (strain ATCC 49188 / DSM 6882 / CCUG 24695 / JCM 21032 / LMG 3331 / NBRC 15819 / NCTC 12168 / Alc 37) (Ochrobactrum anthropi) protein is Putative pre-16S rRNA nuclease.